Here is a 384-residue protein sequence, read N- to C-terminus: GDP/UDP-N,N'-diacetylbacillosamine 2-epimerase (hydrolyzing) (384 aa).

This sequence belongs to the UDP-N-acetylglucosamine 2-epimerase family.

It carries out the reaction GDP-N,N'-diacetylbacillosamine + H2O = 2,4-diacetamido-2,4,6-trideoxy-alpha-D-mannopyranose + GDP + H(+). The enzyme catalyses UDP-N,N'-diacetylbacillosamine + H2O = 2,4-diacetamido-2,4,6-trideoxy-alpha-D-mannopyranose + UDP + H(+). Functionally, involved in biosynthesis of legionaminic acid (5,7-diamino-3,5,7,9-tetradeoxy-D-glycero-D-galacto-non-2-ulosonic acid)(Leg), a sialic acid-like derivative that is incorporated into flagellin via O-linkage to Ser/Thr. Catalyzes the conversion of GDP-N,N'-diacetylbacillosamine (Bac2Ac4Ac) into 2,4-diacetamido-2,4,6-trideoxymannose and GDP. It can also use UDP-N,N'-diacetylbacillosamine however it generates small quantities of 2,4-diacetamido-2,4,6-trideoxymannose. This Campylobacter jejuni subsp. jejuni serotype O:2 (strain ATCC 700819 / NCTC 11168) protein is GDP/UDP-N,N'-diacetylbacillosamine 2-epimerase (hydrolyzing) (legG).